We begin with the raw amino-acid sequence, 509 residues long: Maturase K (509 aa).

It belongs to the intron maturase 2 family. MatK subfamily.

Its subcellular location is the plastid. It localises to the chloroplast. Its function is as follows. Usually encoded in the trnK tRNA gene intron. Probably assists in splicing its own and other chloroplast group II introns. In Austrocylindropuntia vestita (Cactus), this protein is Maturase K.